The chain runs to 379 residues: Glutamate 5-kinase (379 aa).

Position 15 (Lys-15) interacts with ATP. 3 residues coordinate substrate: Ser-59, Asp-146, and Asn-158. 178-179 is an ATP binding site; the sequence is TD. Residues 285–363 form the PUA domain; sequence RGAVTVDVGA…SEFERLLGYS (79 aa).

The protein belongs to the glutamate 5-kinase family.

The protein localises to the cytoplasm. It catalyses the reaction L-glutamate + ATP = L-glutamyl 5-phosphate + ADP. The protein operates within amino-acid biosynthesis; L-proline biosynthesis; L-glutamate 5-semialdehyde from L-glutamate: step 1/2. Functionally, catalyzes the transfer of a phosphate group to glutamate to form L-glutamate 5-phosphate. The polypeptide is Glutamate 5-kinase (Paracidovorax citrulli (strain AAC00-1) (Acidovorax citrulli)).